Here is a 609-residue protein sequence, read N- to C-terminus: DNA-directed RNA polymerase subunit beta' (609 aa).

4 residues coordinate Zn(2+): cysteine 67, cysteine 69, cysteine 82, and cysteine 85. Mg(2+) contacts are provided by aspartate 460, aspartate 462, and aspartate 464.

Belongs to the RNA polymerase beta' chain family. RpoC1 subfamily. In terms of assembly, in plastids the minimal PEP RNA polymerase catalytic core is composed of four subunits: alpha, beta, beta', and beta''. When a (nuclear-encoded) sigma factor is associated with the core the holoenzyme is formed, which can initiate transcription. It depends on Mg(2+) as a cofactor. Zn(2+) serves as cofactor.

The protein resides in the plastid. The protein localises to the chloroplast. It carries out the reaction RNA(n) + a ribonucleoside 5'-triphosphate = RNA(n+1) + diphosphate. Functionally, DNA-dependent RNA polymerase catalyzes the transcription of DNA into RNA using the four ribonucleoside triphosphates as substrates. This is DNA-directed RNA polymerase subunit beta' from Emiliania huxleyi (Coccolithophore).